Reading from the N-terminus, the 469-residue chain is Bile acid receptor (469 aa).

Residue K119 forms a Glycyl lysine isopeptide (Lys-Gly) (interchain with G-Cter in SUMO1) linkage. Positions 121 to 196 form a DNA-binding region, nuclear receptor; it reads DELCVVCGDR…MGMLAECLLT (76 aa). The segment at 124-144 adopts an NR C4-type zinc-finger fold; sequence CVVCGDRASGYHYNALTCEGC. 2 positions are modified to phosphoserine; by PKC/PRKCA: S132 and S151. N6-acetyllysine; by EP300 is present on K154. Residues 160–184 form an NR C4-type zinc finger; sequence CKNGGNCVMDMYMRRKCQDCRLRKC. K203 carries the post-translational modification N6-methyllysine; by SETD7. K210 bears the N6-acetyllysine; by EP300 mark. An NR LBD domain is found at 245 to 469; sequence DQQTLLDYIM…PLLCEIWDVQ (225 aa). A Glycyl lysine isopeptide (Lys-Gly) (interchain with G-Cter in SUMO1) cross-link involves residue K272. R328 contributes to the 3beta,7beta-dihydroxy-5beta-cholan-24-oate binding site. Residues R328, Y358, and Y366 each contribute to the chenodeoxycholate site. Y366 serves as a coordination point for 3beta,7beta-dihydroxy-5beta-cholan-24-oate. Phosphothreonine; by PKC/PRKCZ is present on T439. H444 is a binding site for chenodeoxycholate.

The protein belongs to the nuclear hormone receptor family. NR1 subfamily. As to quaternary structure, heterodimer with RXRA; the heterodimerization enhances the binding affinity for LXXLL motifs from coactivators. Binds DNA predominantly as a heterodimer with RXRA. After activation by agonist binding interacts with coactivators. Interacts with NCOA1, NCOA2, PPARGC1A, CARM1, SETD7, PRMT1, GPS2, SMARCA4 and MED1, EP300 and SMARCD1. Interacts with XRCC5 and XRCC6; decreasing NR1H4/FXR transactivation activity towards ABCB11/BSEP. Interacts with PAGR1 AND NCOA6; indicative for an association with an MLL2/MLL3 complex (ASCOM). Post-translationally, acetylated by EP300. Lys-210 as is the major acetylation site for EP300; the dynamicly regulated acetylation inhibits heterodimerization with RXRA and transactivation activity. Deacetylated by SIRT1. In terms of processing, methylation may increase transactivation of target genes. Phosphorylation by PKC/PRKCA increases transactivation activity by promoting association with PPARGC1A. Post-translationally, sumoylated upon ligand binding.

The protein localises to the nucleus. Ligand-activated transcription factor. Receptor for bile acids (BAs) such as chenodeoxycholic acid (CDCA), lithocholic acid, deoxycholic acid (DCA) and allocholic acid (ACA). Plays a essential role in BA homeostasis through the regulation of genes involved in BA synthesis, conjugation and enterohepatic circulation. Also regulates lipid and glucose homeostasis and is involved innate immune response. The FXR-RXR heterodimer binds predominantly to farnesoid X receptor response elements (FXREs) containing two inverted repeats of the consensus sequence 5'-AGGTCA-3' in which the monomers are spaced by 1 nucleotide (IR-1) but also to tandem repeat DR1 sites with lower affinity, and can be activated by either FXR or RXR-specific ligands. It is proposed that monomeric nuclear receptors such as NR5A2/LRH-1 bound to coregulatory nuclear responsive element (NRE) halfsites located in close proximity to FXREs modulate transcriptional activity. In the liver activates transcription of the corepressor NR0B2 thereby indirectly inhibiting CYP7A1 and CYP8B1 (involved in BA synthesis) implicating at least in part histone demethylase KDM1A resulting in epigenomic repression, and SLC10A1/NTCP (involved in hepatic uptake of conjugated BAs). Activates transcription of the repressor MAFG (involved in regulation of BA synthesis). Activates transcription of SLC27A5/BACS and BAAT (involved in BA conjugation), ABCB11/BSEP (involved in bile salt export) by directly recruiting histone methyltransferase CARM1, and ABCC2/MRP2 (involved in secretion of conjugated BAs) and ABCB4 (involved in secretion of phosphatidylcholine in the small intestine). Activates transcription of SLC27A5/BACS and BAAT (involved in BA conjugation), ABCB11/BSEP (involved in bile salt export) by directly recruiting histone methyltransferase CARM1, and ABCC2/MRP2 (involved in secretion of conjugated BAs) and ABCB4 (involved in secretion of phosphatidylcholine in the small intestine). In the intestine activates FGF19 expression and secretion leading to hepatic CYP7A1 repression. The function also involves the coordinated induction of hepatic KLB/beta-klotho expression. Regulates transcription of liver UGT2B4 and SULT2A1 involved in BA detoxification; binding to the UGT2B4 promoter seems to imply a monomeric transactivation independent of RXRA. Modulates lipid homeostasis by activating liver NR0B2/SHP-mediated repression of SREBF1 (involved in de novo lipogenesis), expression of PLTP (involved in HDL formation), SCARB1 (involved in HDL hepatic uptake), APOE, APOC1, APOC4, PPARA (involved in beta-oxidation of fatty acids), VLDLR and SDC1 (involved in the hepatic uptake of LDL and IDL remnants), and inhibiting expression of MTTP (involved in VLDL assembly). Increases expression of APOC2 (promoting lipoprotein lipase activity implicated in triglyceride clearance). Transrepresses APOA1 involving a monomeric competition with NR2A1 for binding to a DR1 element. Also reduces triglyceride clearance by inhibiting expression of ANGPTL3 and APOC3 (both involved in inhibition of lipoprotein lipase). Involved in glucose homeostasis by modulating hepatic gluconeogenesis through activation of NR0B2/SHP-mediated repression of respective genes. Modulates glycogen synthesis (inducing phosphorylation of glycogen synthase kinase-3). Modulates glucose-stimulated insulin secretion and is involved in insulin resistance. Involved in intestinal innate immunity. Plays a role in protecting the distal small intestine against bacterial overgrowth and preservation of the epithelial barrier. Down-regulates inflammatory cytokine expression in several types of immune cells including macrophages and mononuclear cells. Mediates trans-repression of TLR4-induced cytokine expression; the function seems to require its sumoylation and prevents N-CoR nuclear receptor corepressor clearance from target genes such as IL1B and NOS2. Involved in the TLR9-mediated protective mechanism in intestinal inflammation. Plays an anti-inflammatory role in liver inflammation; proposed to inhibit pro-inflammatory (but not antiapoptotic) NF-kappa-B signaling. This chain is Bile acid receptor (Nr1h4), found in Rattus norvegicus (Rat).